A 380-amino-acid chain; its full sequence is MTSPLRIALVAGEASGDILGSGLMRALKARHPDVRFIGVGGPLMEAEGMQSYFPMERLSVMGLVEVLGRLRELLARRKLLVQTLIDEKPDVFIGIDAPDFTLNIELQLRRAGIKTVHYVSPSVWAWRQKRVLKIREGCDLMLTLLPFEARFYEEKGVPVRFVGHPLADTIPLESDRGATRAELGLSVDGPVVALMPGSRGGEVGRLGALFFDAAERLLVERPGLRFVLPCASPQRRAQVEQLLQGRDLPITLLDGRSHVALAACDAVLIASGTATLEALLYKRPMVVAYRMAPLTFWVLKRLVKSPYVSLPNLLAQRLLVPELLQDDATPEALARTLLPLIEDGHAQTEGFDAIHRILRRDASNQAADAVLSLLGLPLSL.

This sequence belongs to the LpxB family.

The enzyme catalyses a lipid X + a UDP-2-N,3-O-bis[(3R)-3-hydroxyacyl]-alpha-D-glucosamine = a lipid A disaccharide + UDP + H(+). It functions in the pathway bacterial outer membrane biogenesis; LPS lipid A biosynthesis. In terms of biological role, condensation of UDP-2,3-diacylglucosamine and 2,3-diacylglucosamine-1-phosphate to form lipid A disaccharide, a precursor of lipid A, a phosphorylated glycolipid that anchors the lipopolysaccharide to the outer membrane of the cell. This Pseudomonas syringae pv. tomato (strain ATCC BAA-871 / DC3000) protein is Lipid-A-disaccharide synthase.